The primary structure comprises 223 residues: UPF0441 protein YgiB (223 aa).

Positions 178 to 195 (TVPKTAMAPKPATTTTVT) are enriched in low complexity. Residues 178 to 223 (TVPKTAMAPKPATTTTVTRGGFGESVAKQSTMQRGATGTSSRSMGG) are disordered. The segment covering 204 to 223 (AKQSTMQRGATGTSSRSMGG) has biased composition (polar residues).

The protein belongs to the UPF0441 family.

In Escherichia coli O6:K15:H31 (strain 536 / UPEC), this protein is UPF0441 protein YgiB.